The chain runs to 477 residues: UDP-N-acetylmuramate--L-alanine ligase (477 aa).

118–124 provides a ligand contact to ATP; it reads GTHGKTS.

The protein belongs to the MurCDEF family.

It localises to the cytoplasm. The enzyme catalyses UDP-N-acetyl-alpha-D-muramate + L-alanine + ATP = UDP-N-acetyl-alpha-D-muramoyl-L-alanine + ADP + phosphate + H(+). It functions in the pathway cell wall biogenesis; peptidoglycan biosynthesis. Cell wall formation. This Corynebacterium diphtheriae (strain ATCC 700971 / NCTC 13129 / Biotype gravis) protein is UDP-N-acetylmuramate--L-alanine ligase.